The following is a 137-amino-acid chain: ATP synthase epsilon chain, chloroplastic (137 aa).

This sequence belongs to the ATPase epsilon chain family. F-type ATPases have 2 components, CF(1) - the catalytic core - and CF(0) - the membrane proton channel. CF(1) has five subunits: alpha(3), beta(3), gamma(1), delta(1), epsilon(1). CF(0) has three main subunits: a, b and c.

It localises to the plastid. Its subcellular location is the chloroplast thylakoid membrane. In terms of biological role, produces ATP from ADP in the presence of a proton gradient across the membrane. In Agrostis stolonifera (Creeping bentgrass), this protein is ATP synthase epsilon chain, chloroplastic.